The sequence spans 238 residues: 7-cyano-7-deazaguanine synthase (238 aa).

Residue 14 to 24 (FSGGQDSTTCL) participates in ATP binding. Zn(2+) contacts are provided by Cys-195, Cys-204, Cys-207, and Cys-210.

The protein belongs to the QueC family. Zn(2+) serves as cofactor.

The enzyme catalyses 7-carboxy-7-deazaguanine + NH4(+) + ATP = 7-cyano-7-deazaguanine + ADP + phosphate + H2O + H(+). Its pathway is purine metabolism; 7-cyano-7-deazaguanine biosynthesis. Its function is as follows. Catalyzes the ATP-dependent conversion of 7-carboxy-7-deazaguanine (CDG) to 7-cyano-7-deazaguanine (preQ(0)). The polypeptide is 7-cyano-7-deazaguanine synthase (Baumannia cicadellinicola subsp. Homalodisca coagulata).